Here is a 483-residue protein sequence, read N- to C-terminus: Glucose-1-phosphate adenylyltransferase large subunit 3, chloroplastic/amyloplastic (483 aa).

Belongs to the bacterial/plant glucose-1-phosphate adenylyltransferase family. As to quaternary structure, heterotetramer. In terms of tissue distribution, tubers.

Its subcellular location is the plastid. It localises to the chloroplast. The protein resides in the amyloplast. The catalysed reaction is alpha-D-glucose 1-phosphate + ATP + H(+) = ADP-alpha-D-glucose + diphosphate. It participates in glycan biosynthesis; starch biosynthesis. With respect to regulation, activated by 3'phosphoglycerate, inhibited by orthophosphate. Allosteric regulation. Its function is as follows. This protein plays a role in synthesis of starch. It catalyzes the synthesis of the activated glycosyl donor, ADP-glucose from Glc-1-P and ATP. In Solanum tuberosum (Potato), this protein is Glucose-1-phosphate adenylyltransferase large subunit 3, chloroplastic/amyloplastic (AGPS3).